The sequence spans 86 residues: Large ribosomal subunit protein bL28 (86 aa).

This sequence belongs to the bacterial ribosomal protein bL28 family.

In Bacteroides fragilis (strain ATCC 25285 / DSM 2151 / CCUG 4856 / JCM 11019 / LMG 10263 / NCTC 9343 / Onslow / VPI 2553 / EN-2), this protein is Large ribosomal subunit protein bL28.